The chain runs to 238 residues: ATP-dependent dethiobiotin synthetase BioD (238 aa).

12–17 (GVGKTV) serves as a coordination point for ATP. T16 serves as a coordination point for Mg(2+). K37 is a catalytic residue. T41 is a substrate binding site. ATP is bound by residues D50, 109-112 (EGAG), 170-171 (GS), and 200-202 (PAG). Mg(2+) is bound by residues D50 and E109.

The protein belongs to the dethiobiotin synthetase family. In terms of assembly, homodimer. It depends on Mg(2+) as a cofactor.

The protein resides in the cytoplasm. It catalyses the reaction (7R,8S)-7,8-diammoniononanoate + CO2 + ATP = (4R,5S)-dethiobiotin + ADP + phosphate + 3 H(+). Its pathway is cofactor biosynthesis; biotin biosynthesis; biotin from 7,8-diaminononanoate: step 1/2. Catalyzes a mechanistically unusual reaction, the ATP-dependent insertion of CO2 between the N7 and N8 nitrogen atoms of 7,8-diaminopelargonic acid (DAPA, also called 7,8-diammoniononanoate) to form a ureido ring. In Frankia casuarinae (strain DSM 45818 / CECT 9043 / HFP020203 / CcI3), this protein is ATP-dependent dethiobiotin synthetase BioD.